Reading from the N-terminus, the 478-residue chain is Ribulose bisphosphate carboxylase large chain (478 aa).

A propeptide spanning residues 1–2 is cleaved from the precursor; it reads MS. Pro-3 carries the N-acetylproline modification. An N6,N6,N6-trimethyllysine modification is found at Lys-14. Positions 123 and 173 each coordinate substrate. Lys-175 (proton acceptor) is an active-site residue. Lys-177 is a substrate binding site. Mg(2+) is bound by residues Lys-201, Asp-203, and Glu-204. The residue at position 201 (Lys-201) is an N6-carboxylysine. The active-site Proton acceptor is the His-294. 3 residues coordinate substrate: Arg-295, His-327, and Ser-379.

It belongs to the RuBisCO large chain family. Type I subfamily. Heterohexadecamer of 8 large chains and 8 small chains; disulfide-linked. The disulfide link is formed within the large subunit homodimers. Requires Mg(2+) as cofactor. In terms of processing, the disulfide bond which can form in the large chain dimeric partners within the hexadecamer appears to be associated with oxidative stress and protein turnover.

It is found in the plastid. The protein localises to the chloroplast. The enzyme catalyses 2 (2R)-3-phosphoglycerate + 2 H(+) = D-ribulose 1,5-bisphosphate + CO2 + H2O. It catalyses the reaction D-ribulose 1,5-bisphosphate + O2 = 2-phosphoglycolate + (2R)-3-phosphoglycerate + 2 H(+). In terms of biological role, ruBisCO catalyzes two reactions: the carboxylation of D-ribulose 1,5-bisphosphate, the primary event in carbon dioxide fixation, as well as the oxidative fragmentation of the pentose substrate in the photorespiration process. Both reactions occur simultaneously and in competition at the same active site. The sequence is that of Ribulose bisphosphate carboxylase large chain from Neurachne munroi.